The following is a 560-amino-acid chain: Trafficking protein particle complex II-specific subunit 65 (560 aa).

Residues S164 to D193 form a disordered region. S393 and S398 each carry phosphoserine.

As to quaternary structure, part of the multisubunit TRAPP (transport protein particle) II complex composed of BET3, BET5, TRS20, TRS23, TRS31, TRS33, TRS65, TRS120 and TRS130. Interacts directly with TRS120 and TRS130.

It localises to the cytoplasm. The protein localises to the golgi apparatus. The protein resides in the cis-Golgi network. It participates in glycan metabolism; beta-glucan biosynthesis. Its function is as follows. Specific subunit of the TRAPP II complex, a highly conserved vesicle tethering complex that functions in the late Golgi as a guanine nucleotide exchanger (GEF) for the Golgi YPT1 GTPase. TRS65 plays a role in the YPT GEF activity of TRAPP II in concert with the two other TRAPP II-specific subunits TRS120 and TRS130. Involved in cell wall (1--&gt;6)-beta-glucan synthesis. In Saccharomyces cerevisiae (strain ATCC 204508 / S288c) (Baker's yeast), this protein is Trafficking protein particle complex II-specific subunit 65 (TRS65).